A 216-amino-acid chain; its full sequence is Kynurenine formamidase (216 aa).

Substrate is bound at residue tryptophan 24. Residues histidine 54, histidine 58, and aspartate 60 each coordinate Zn(2+). Histidine 64 (proton donor/acceptor) is an active-site residue. The Zn(2+) site is built by histidine 164 and glutamate 176.

The protein belongs to the Cyclase 1 superfamily. KynB family. As to quaternary structure, homodimer. Zn(2+) is required as a cofactor.

It catalyses the reaction N-formyl-L-kynurenine + H2O = L-kynurenine + formate + H(+). The protein operates within amino-acid degradation; L-tryptophan degradation via kynurenine pathway; L-kynurenine from L-tryptophan: step 2/2. Its function is as follows. Catalyzes the hydrolysis of N-formyl-L-kynurenine to L-kynurenine, the second step in the kynurenine pathway of tryptophan degradation. This Erythrobacter litoralis (strain HTCC2594) protein is Kynurenine formamidase.